The chain runs to 214 residues: EEF1A lysine methyltransferase 1 (214 aa).

An N-acetylserine modification is found at serine 2. Serine 2 is modified (phosphoserine).

This sequence belongs to the class I-like SAM-binding methyltransferase superfamily. EFM5 family.

The protein localises to the cytoplasm. It carries out the reaction L-lysyl-[protein] + 3 S-adenosyl-L-methionine = N(6),N(6),N(6)-trimethyl-L-lysyl-[protein] + 3 S-adenosyl-L-homocysteine + 3 H(+). Functionally, protein N-lysine methyltransferase that selectively catalyzes the trimethylation of EEF1A at 'Lys-79'. The protein is EEF1A lysine methyltransferase 1 of Homo sapiens (Human).